The chain runs to 211 residues: Calaxin (211 aa).

EF-hand domains follow at residues 64-99 (TDDM…FLRG), 100-135 (SLEE…SLLK), and 145-180 (GIKD…ETLL). 14 residues coordinate Ca(2+): Asp-77, Asp-79, Asp-81, Cys-83, Glu-88, Asp-113, Asn-115, Asp-117, Glu-124, Asp-158, Asp-160, Asp-162, Lys-164, and Asp-169.

As to quaternary structure, component of the outer dynein arm-docking complex along with ODAD1, ODAD2, ODAD3 and ODAD4. Strong expression in the respiratory epithelium. Expressed in the sperm.

The protein localises to the cytoplasm. It is found in the cytoskeleton. Its subcellular location is the cilium axoneme. It localises to the cell projection. The protein resides in the cilium. The protein localises to the flagellum. Component of the outer dynein arm-docking complex (ODA-DC) that mediates outer dynein arms (ODA) binding onto the doublet microtubule. Seems to regulate the assembly of both ODAs and their axonemal docking complex onto ciliary microtubules. Regulates ciliary and flagellar motility and is required for cilia-driven determination of body laterality. The chain is Calaxin from Homo sapiens (Human).